The primary structure comprises 450 residues: Interferon-induced protein 75 (450 aa).

In terms of domain architecture, HSR spans 1–108 (MFTLTKALEK…IFRSFRNVGY (108 aa)). Disordered regions lie at residues 131-156 (CSLQTLLPPPRPQLSLPSHLSSAPRV) and 170-225 (LDEQ…VKDD). The segment covering 143 to 154 (QLSLPSHLSSAP) has biased composition (low complexity). Phosphoserine occurs at positions 175 and 177. Basic and acidic residues predominate over residues 197 to 212 (SRDHQRKDKEDSREMP). Ser-226 carries the phosphoserine modification. Disordered regions lie at residues 238-283 (VLCT…HGVQ) and 318-360 (AQTS…KNDA). Positions 245–267 (KKARRKKRLNWSNSKRGRQKKKP) are enriched in basic residues. A Nuclear localization signal motif is present at residues 251–266 (KRLNWSNSKRGRQKKK). Polar residues predominate over residues 343 to 353 (TSTAGKTTQVP). Residues 358 to 439 (NDAVDFLSPT…RQLEQKGLLF (82 aa)) form the SAND domain.

It is found in the nucleus. This Mus caroli (Ryukyu mouse) protein is Interferon-induced protein 75 (Ifi75).